The primary structure comprises 248 residues: PF03932 family protein CutC (248 aa).

The protein belongs to the CutC family. As to quaternary structure, homodimer.

Its subcellular location is the cytoplasm. This Salmonella newport (strain SL254) protein is PF03932 family protein CutC.